Consider the following 288-residue polypeptide: Glucose-1-phosphate thymidylyltransferase (288 aa).

D108 and D223 together coordinate Mg(2+).

Belongs to the glucose-1-phosphate thymidylyltransferase family. Homotetramer. Mg(2+) serves as cofactor.

It catalyses the reaction dTTP + alpha-D-glucose 1-phosphate + H(+) = dTDP-alpha-D-glucose + diphosphate. Catalyzes the formation of dTDP-glucose, from dTTP and glucose 1-phosphate, as well as its pyrophosphorolysis. The sequence is that of Glucose-1-phosphate thymidylyltransferase (rmlA) from Neisseria gonorrhoeae.